The chain runs to 510 residues: Bifunctional purine biosynthesis protein PurH (510 aa).

Residues 1-142 (MRALLSVSDK…KNYKDVMVLC (142 aa)) enclose the MGS-like domain.

This sequence belongs to the PurH family.

It catalyses the reaction (6R)-10-formyltetrahydrofolate + 5-amino-1-(5-phospho-beta-D-ribosyl)imidazole-4-carboxamide = 5-formamido-1-(5-phospho-D-ribosyl)imidazole-4-carboxamide + (6S)-5,6,7,8-tetrahydrofolate. The catalysed reaction is IMP + H2O = 5-formamido-1-(5-phospho-D-ribosyl)imidazole-4-carboxamide. Its pathway is purine metabolism; IMP biosynthesis via de novo pathway; 5-formamido-1-(5-phospho-D-ribosyl)imidazole-4-carboxamide from 5-amino-1-(5-phospho-D-ribosyl)imidazole-4-carboxamide (10-formyl THF route): step 1/1. The protein operates within purine metabolism; IMP biosynthesis via de novo pathway; IMP from 5-formamido-1-(5-phospho-D-ribosyl)imidazole-4-carboxamide: step 1/1. The chain is Bifunctional purine biosynthesis protein PurH from Campylobacter jejuni (strain RM1221).